We begin with the raw amino-acid sequence, 356 residues long: sn-glycerol-3-phosphate import ATP-binding protein UgpC (356 aa).

The 232-residue stretch at 4 to 235 (LKLQAVTKSW…PASRFVASFI (232 aa)) folds into the ABC transporter domain. 37 to 44 (GPSGCGKS) contacts ATP.

This sequence belongs to the ABC transporter superfamily. sn-glycerol-3-phosphate importer (TC 3.A.1.1.3) family. As to quaternary structure, the complex is composed of two ATP-binding proteins (UgpC), two transmembrane proteins (UgpA and UgpE) and a solute-binding protein (UgpB).

The protein resides in the cell inner membrane. It carries out the reaction sn-glycerol 3-phosphate(out) + ATP + H2O = sn-glycerol 3-phosphate(in) + ADP + phosphate + H(+). In terms of biological role, part of the ABC transporter complex UgpBAEC involved in sn-glycerol-3-phosphate (G3P) import. Responsible for energy coupling to the transport system. In Salmonella typhimurium (strain LT2 / SGSC1412 / ATCC 700720), this protein is sn-glycerol-3-phosphate import ATP-binding protein UgpC.